The primary structure comprises 97 residues: U6-theraphotoxin-Hhn1a 3 (97 aa).

The N-terminal stretch at 1-33 is a signal peptide; the sequence is MLIKQFSRRSKNTKVQILLAFAALFVLAVGSYA. The propeptide occupies 34–61; sequence SESKKLDLRDALFSAMFSADYQLNPQER. Intrachain disulfides connect cysteine 63–cysteine 77, cysteine 70–cysteine 82, and cysteine 76–cysteine 89.

Belongs to the neurotoxin 10 (Hwtx-1) family. 12 (Hntx-12) subfamily. Expressed by the venom gland.

The protein localises to the secreted. Its function is as follows. Ion channel inhibitor. This is U6-theraphotoxin-Hhn1a 3 from Cyriopagopus hainanus (Chinese bird spider).